A 117-amino-acid chain; its full sequence is Large ribosomal subunit protein bL20c (117 aa).

Belongs to the bacterial ribosomal protein bL20 family.

The protein resides in the plastid. The protein localises to the chloroplast. Functionally, binds directly to 23S ribosomal RNA and is necessary for the in vitro assembly process of the 50S ribosomal subunit. It is not involved in the protein synthesizing functions of that subunit. This is Large ribosomal subunit protein bL20c (rpl20) from Bigelowiella natans (Pedinomonas minutissima).